Reading from the N-terminus, the 198-residue chain is Ribonuclease HII (198 aa).

The RNase H type-2 domain maps to 10-198 (HLVAGVDEVG…PVKRALGLVS (189 aa)). A divalent metal cation is bound by residues Asp-16, Glu-17, and Asp-108.

This sequence belongs to the RNase HII family. It depends on Mn(2+) as a cofactor. Mg(2+) is required as a cofactor.

Its subcellular location is the cytoplasm. The enzyme catalyses Endonucleolytic cleavage to 5'-phosphomonoester.. Endonuclease that specifically degrades the RNA of RNA-DNA hybrids. The chain is Ribonuclease HII from Salmonella paratyphi A (strain AKU_12601).